A 132-amino-acid polypeptide reads, in one-letter code: Small ribosomal subunit protein uS11 (132 aa).

It belongs to the universal ribosomal protein uS11 family. In terms of assembly, part of the 30S ribosomal subunit.

Functionally, located on the platform of the 30S subunit. This chain is Small ribosomal subunit protein uS11, found in Caldivirga maquilingensis (strain ATCC 700844 / DSM 13496 / JCM 10307 / IC-167).